The primary structure comprises 291 residues: 4-diphosphocytidyl-2-C-methyl-D-erythritol kinase (291 aa).

Lysine 14 is a catalytic residue. An ATP-binding site is contributed by 96-106 (PFGAGLGGGSS). Aspartate 138 is an active-site residue.

It belongs to the GHMP kinase family. IspE subfamily.

It catalyses the reaction 4-CDP-2-C-methyl-D-erythritol + ATP = 4-CDP-2-C-methyl-D-erythritol 2-phosphate + ADP + H(+). It participates in isoprenoid biosynthesis; isopentenyl diphosphate biosynthesis via DXP pathway; isopentenyl diphosphate from 1-deoxy-D-xylulose 5-phosphate: step 3/6. Functionally, catalyzes the phosphorylation of the position 2 hydroxy group of 4-diphosphocytidyl-2C-methyl-D-erythritol. This is 4-diphosphocytidyl-2-C-methyl-D-erythritol kinase from Chlorobium phaeovibrioides (strain DSM 265 / 1930) (Prosthecochloris vibrioformis (strain DSM 265)).